Consider the following 38-residue polypeptide: Large ribosomal subunit protein bL36 (38 aa).

Belongs to the bacterial ribosomal protein bL36 family.

In Buchnera aphidicola subsp. Acyrthosiphon pisum (strain 5A), this protein is Large ribosomal subunit protein bL36.